A 92-amino-acid polypeptide reads, in one-letter code: Small ribosomal subunit protein bS20 (92 aa).

Residues 1–25 (MANSAQARKRARQAAKANSHNSALR) form a disordered region.

Belongs to the bacterial ribosomal protein bS20 family.

Its function is as follows. Binds directly to 16S ribosomal RNA. This Burkholderia mallei (strain NCTC 10247) protein is Small ribosomal subunit protein bS20.